Consider the following 288-residue polypeptide: Energy-coupling factor transporter ATP-binding protein EcfA2 (288 aa).

Residues 3 to 245 (IEFKNVDYIY…PDWLKKHFLD (243 aa)) enclose the ABC transporter domain. 40–47 (GHTGSGKS) lines the ATP pocket.

It belongs to the ABC transporter superfamily. Energy-coupling factor EcfA family. As to quaternary structure, forms a stable energy-coupling factor (ECF) transporter complex composed of 2 membrane-embedded substrate-binding proteins (S component), 2 ATP-binding proteins (A component) and 2 transmembrane proteins (T component).

It is found in the cell membrane. ATP-binding (A) component of a common energy-coupling factor (ECF) ABC-transporter complex. Unlike classic ABC transporters this ECF transporter provides the energy necessary to transport a number of different substrates. In Lactobacillus gasseri (strain ATCC 33323 / DSM 20243 / BCRC 14619 / CIP 102991 / JCM 1131 / KCTC 3163 / NCIMB 11718 / NCTC 13722 / AM63), this protein is Energy-coupling factor transporter ATP-binding protein EcfA2.